A 391-amino-acid polypeptide reads, in one-letter code: 3-ketoacyl-CoA thiolase (391 aa).

Cys95 serves as the catalytic Acyl-thioester intermediate. Residues His347 and Cys377 each act as proton acceptor in the active site.

The protein belongs to the thiolase-like superfamily. Thiolase family. Heterotetramer of two alpha chains (FadB) and two beta chains (FadA).

The protein localises to the cytoplasm. The enzyme catalyses an acyl-CoA + acetyl-CoA = a 3-oxoacyl-CoA + CoA. The protein operates within lipid metabolism; fatty acid beta-oxidation. Its function is as follows. Catalyzes the final step of fatty acid oxidation in which acetyl-CoA is released and the CoA ester of a fatty acid two carbons shorter is formed. The sequence is that of 3-ketoacyl-CoA thiolase from Saccharophagus degradans (strain 2-40 / ATCC 43961 / DSM 17024).